A 165-amino-acid chain; its full sequence is 6,7-dimethyl-8-ribityllumazine synthase (165 aa).

5-amino-6-(D-ribitylamino)uracil contacts are provided by residues phenylalanine 22, 56–58, and 80–82; these read SME and AVI. 85–86 serves as a coordination point for (2S)-2-hydroxy-3-oxobutyl phosphate; it reads ET. The active-site Proton donor is the histidine 88. A 5-amino-6-(D-ribitylamino)uracil-binding site is contributed by phenylalanine 113. Arginine 127 contacts (2S)-2-hydroxy-3-oxobutyl phosphate.

The protein belongs to the DMRL synthase family.

The catalysed reaction is (2S)-2-hydroxy-3-oxobutyl phosphate + 5-amino-6-(D-ribitylamino)uracil = 6,7-dimethyl-8-(1-D-ribityl)lumazine + phosphate + 2 H2O + H(+). Its pathway is cofactor biosynthesis; riboflavin biosynthesis; riboflavin from 2-hydroxy-3-oxobutyl phosphate and 5-amino-6-(D-ribitylamino)uracil: step 1/2. Its function is as follows. Catalyzes the formation of 6,7-dimethyl-8-ribityllumazine by condensation of 5-amino-6-(D-ribitylamino)uracil with 3,4-dihydroxy-2-butanone 4-phosphate. This is the penultimate step in the biosynthesis of riboflavin. The protein is 6,7-dimethyl-8-ribityllumazine synthase of Thermotoga petrophila (strain ATCC BAA-488 / DSM 13995 / JCM 10881 / RKU-1).